The sequence spans 494 residues: Glycerol kinase (494 aa).

ADP is bound at residue threonine 13. The ATP site is built by threonine 13, threonine 14, and serine 15. Threonine 13 provides a ligand contact to sn-glycerol 3-phosphate. Residue arginine 17 coordinates ADP. Residues arginine 83, glutamate 84, tyrosine 135, and aspartate 244 each contribute to the sn-glycerol 3-phosphate site. Arginine 83, glutamate 84, tyrosine 135, aspartate 244, and glutamine 245 together coordinate glycerol. 2 residues coordinate ADP: threonine 266 and glycine 309. Residues threonine 266, glycine 309, glutamine 313, and glycine 410 each contribute to the ATP site. ADP is bound by residues glycine 410 and asparagine 414.

It belongs to the FGGY kinase family.

It catalyses the reaction glycerol + ATP = sn-glycerol 3-phosphate + ADP + H(+). Its pathway is polyol metabolism; glycerol degradation via glycerol kinase pathway; sn-glycerol 3-phosphate from glycerol: step 1/1. Inhibited by fructose 1,6-bisphosphate (FBP). Its function is as follows. Key enzyme in the regulation of glycerol uptake and metabolism. Catalyzes the phosphorylation of glycerol to yield sn-glycerol 3-phosphate. This is Glycerol kinase from Shewanella oneidensis (strain ATCC 700550 / JCM 31522 / CIP 106686 / LMG 19005 / NCIMB 14063 / MR-1).